A 153-amino-acid chain; its full sequence is uncharacterized protein (153 aa).

2 disordered regions span residues 24 to 87 (PEDS…DRPL) and 101 to 153 (GDPR…RIPS). Low complexity predominate over residues 27 to 37 (SSCPCPRLPLS). Positions 143-153 (TRKESSCRIPS) are enriched in basic and acidic residues.

This is an uncharacterized protein from Dryophytes versicolor (chameleon treefrog).